The primary structure comprises 721 residues: Mitogen-activated protein kinase 6 (721 aa).

Met1 participates in a covalent cross-link: Peptide (Met-Gly) (interchain with G-Cter in ubiquitin). The Protein kinase domain occupies 20–316 (YMDLKPLGCG…AEEALSHPYM (297 aa)). ATP is bound by residues 26–34 (LGCGGNGLV) and Lys49. Catalysis depends on Asp152, which acts as the Proton acceptor. Ser189 carries the post-translational modification Phosphoserine; by PAK1, PAK2 and PAK3. Residues 189 to 191 (SEG) carry the SEG motif motif. Residues 332 to 337 (FHIEDE) carry the FRIEDE motif motif. Ser386, Ser452, Ser556, Ser558, Ser665, and Ser684 each carry phosphoserine. A compositionally biased stretch (polar residues) spans 701-715 (AMKSSPQIPHQTYSS). A disordered region spans residues 701-721 (AMKSSPQIPHQTYSSILKHLN).

Belongs to the protein kinase superfamily. CMGC Ser/Thr protein kinase family. MAP kinase subfamily. As to quaternary structure, heterodimer with ERK4/MAPK4. Interacts with (via FRIEDE motif) MAPKAPK5. Interacts with UBE3A; this interaction may be indirect and mediated by HERC2, possibly via HERC2 interaction with NEURL4. Mg(2+) is required as a cofactor. In terms of processing, phosphorylated at Ser-189 by PAK1, PAK2 and PAK3 resulting in catalytic activation. Phosphorylated by MAPKAPK5 at other sites. Ubiquitination at Met-1 leads to degradation by the proteasome pathway.

Its subcellular location is the cytoplasm. It localises to the nucleus. The catalysed reaction is L-seryl-[protein] + ATP = O-phospho-L-seryl-[protein] + ADP + H(+). The enzyme catalyses L-threonyl-[protein] + ATP = O-phospho-L-threonyl-[protein] + ADP + H(+). Activated by phosphorylation at Ser-189. Its function is as follows. Atypical MAPK protein. Phosphorylates microtubule-associated protein 2 (MAP2) and MAPKAPK5. The precise role of the complex formed with MAPKAPK5 is still unclear, but the complex follows a complex set of phosphorylation events: upon interaction with atypical MAPKAPK5, ERK3/MAPK6 is phosphorylated at Ser-189 and then mediates phosphorylation and activation of MAPKAPK5, which in turn phosphorylates ERK3/MAPK6. May promote entry in the cell cycle. This is Mitogen-activated protein kinase 6 (MAPK6) from Pongo abelii (Sumatran orangutan).